A 113-amino-acid chain; its full sequence is Nucleoid-associated protein CLJ_B0037 (113 aa).

Residues 93–102 (EEDTSSEVKR) show a composition bias toward basic and acidic residues. The segment at 93–113 (EEDTSSEVKRLTGGMNLPGMF) is disordered.

The protein belongs to the YbaB/EbfC family. As to quaternary structure, homodimer.

It localises to the cytoplasm. The protein resides in the nucleoid. Its function is as follows. Binds to DNA and alters its conformation. May be involved in regulation of gene expression, nucleoid organization and DNA protection. The polypeptide is Nucleoid-associated protein CLJ_B0037 (Clostridium botulinum (strain 657 / Type Ba4)).